Reading from the N-terminus, the 410-residue chain is MEFSLDNNINNGAVIKVIGVGGGGGNAVNRMIEENVKGVEFITANTDVQALKHSKAETVIQLGPKYTRGLGAGSQPEVGQKAAEESEQVISESLQGADMIFITAGMGGGTGTGAAPVVAKIAKELGALTVGVVTRPFSFEGPKRGRFAAEGIALLKENVDTLLIISNNRLLEVVDKKTPMLEAFREADNVLRQGVQGISDLITAPGYVNLDFADVKTVMENQGTALMGIGVASGEERVIEATKKAISSPLLETSIDGAEQVLLNITGGLDMTLFEAQDASDIVTNAASGDVNIILGTSINEDLGDEIRVTVIATGIDESKKDRKPHRQTRQAVQPMQQTTQSVEMDQPKSQEEASAFGDWDIRREQNTRPKVDESSLEQVDKKEFDTFHREEPNHNDDELSTPPFFRRKR.

GTP is bound by residues 22 to 26 (GGGGN), 109 to 111 (GTG), Glu140, Arg144, and Asp188. The disordered stretch occupies residues 318-410 (ESKKDRKPHR…STPPFFRRKR (93 aa)). Polar residues predominate over residues 330–344 (RQAVQPMQQTTQSVE). Residues 360–398 (WDIRREQNTRPKVDESSLEQVDKKEFDTFHREEPNHNDD) are compositionally biased toward basic and acidic residues.

It belongs to the FtsZ family. In terms of assembly, homodimer. Polymerizes to form a dynamic ring structure in a strictly GTP-dependent manner. Interacts directly with several other division proteins.

The protein resides in the cytoplasm. Functionally, essential cell division protein that forms a contractile ring structure (Z ring) at the future cell division site. The regulation of the ring assembly controls the timing and the location of cell division. One of the functions of the FtsZ ring is to recruit other cell division proteins to the septum to produce a new cell wall between the dividing cells. Binds GTP and shows GTPase activity. The polypeptide is Cell division protein FtsZ (Enterococcus faecalis (strain ATCC 700802 / V583)).